Here is a 279-residue protein sequence, read N- to C-terminus: Urease accessory protein UreD (279 aa).

It belongs to the UreD family. As to quaternary structure, ureD, UreF and UreG form a complex that acts as a GTP-hydrolysis-dependent molecular chaperone, activating the urease apoprotein by helping to assemble the nickel containing metallocenter of UreC. The UreE protein probably delivers the nickel.

It is found in the cytoplasm. Required for maturation of urease via the functional incorporation of the urease nickel metallocenter. The polypeptide is Urease accessory protein UreD (Pseudomonas fluorescens (strain ATCC BAA-477 / NRRL B-23932 / Pf-5)).